A 222-amino-acid chain; its full sequence is GTP cyclohydrolase 1 (222 aa).

Positions 111, 114, and 182 each coordinate Zn(2+).

Belongs to the GTP cyclohydrolase I family. As to quaternary structure, toroid-shaped homodecamer, composed of two pentamers of five dimers.

It catalyses the reaction GTP + H2O = 7,8-dihydroneopterin 3'-triphosphate + formate + H(+). It participates in cofactor biosynthesis; 7,8-dihydroneopterin triphosphate biosynthesis; 7,8-dihydroneopterin triphosphate from GTP: step 1/1. The sequence is that of GTP cyclohydrolase 1 from Citrobacter koseri (strain ATCC BAA-895 / CDC 4225-83 / SGSC4696).